The chain runs to 546 residues: Chaperonin GroEL (546 aa).

ATP contacts are provided by residues 30–33 (TLGP), lysine 51, 87–91 (DGTTT), glycine 415, 479–481 (NAA), and aspartate 495. The disordered stretch occupies residues 527 to 546 (EEKPDVSASSGGMGGMGGMM). Positions 537 to 546 (GGMGGMGGMM) are enriched in gly residues.

It belongs to the chaperonin (HSP60) family. As to quaternary structure, forms a cylinder of 14 subunits composed of two heptameric rings stacked back-to-back. Interacts with the co-chaperonin GroES.

Its subcellular location is the cytoplasm. The catalysed reaction is ATP + H2O + a folded polypeptide = ADP + phosphate + an unfolded polypeptide.. Its function is as follows. Together with its co-chaperonin GroES, plays an essential role in assisting protein folding. The GroEL-GroES system forms a nano-cage that allows encapsulation of the non-native substrate proteins and provides a physical environment optimized to promote and accelerate protein folding. The chain is Chaperonin GroEL from Baumannia cicadellinicola subsp. Homalodisca coagulata.